Reading from the N-terminus, the 398-residue chain is Argininosuccinate synthase (398 aa).

9–17 (AYSGGLDTS) is a binding site for ATP. Y85 lines the L-citrulline pocket. Position 115 (G115) interacts with ATP. L-aspartate contacts are provided by T117, N121, and D122. N121 lines the L-citrulline pocket. Residues R125, S173, E258, and Y270 each contribute to the L-citrulline site.

The protein belongs to the argininosuccinate synthase family. Type 1 subfamily. In terms of assembly, homotetramer.

Its subcellular location is the cytoplasm. It carries out the reaction L-citrulline + L-aspartate + ATP = 2-(N(omega)-L-arginino)succinate + AMP + diphosphate + H(+). Its pathway is amino-acid biosynthesis; L-arginine biosynthesis; L-arginine from L-ornithine and carbamoyl phosphate: step 2/3. The chain is Argininosuccinate synthase from Streptococcus pneumoniae (strain ATCC BAA-255 / R6).